Consider the following 92-residue polypeptide: Small ribosomal subunit protein uS19 (92 aa).

This sequence belongs to the universal ribosomal protein uS19 family.

Protein S19 forms a complex with S13 that binds strongly to the 16S ribosomal RNA. This chain is Small ribosomal subunit protein uS19, found in Streptococcus thermophilus (strain ATCC BAA-491 / LMD-9).